Here is a 526-residue protein sequence, read N- to C-terminus: Keratin, type I cytoskeletal 10 (526 aa).

The segment covering 1-15 (MSVRYSSSKQYSSSR) has biased composition (low complexity). A disordered region spans residues 1-29 (MSVRYSSSKQYSSSRSGGGGGGGSSLRIS). Positions 1–126 (MSVRYSSSKQ…FGDGGLISGN (126 aa)) are head. Phosphoserine occurs at positions 14, 16, 34, 45, 48, and 151. The tract at residues 127 to 162 (QKITMQNLNDRLASYLDKVRALEESNYELEVKIKEW) is coil 1A. The region spanning 127-441 (QKITMQNLND…SLLEGEGSSG (315 aa)) is the IF rod domain. Residues 163–183 (YEKYGNSRQREPRDYSKYYQT) form a linker 1 region. The segment at 184–275 (IDDLKNQIFN…KNHEEEMRDL (92 aa)) is coil 1B. The segment at 276 to 298 (QNVSTGDVNVEMNAAPGVDLTEL) is linker 12. The tract at residues 299-437 (LNNMRSQYEQ…QTYRSLLEGE (139 aa)) is coil 2. Residues 438-526 (GSSGGGSYGG…GESSSKGPRY (89 aa)) are tail. Residues 458–505 (GGGGYGGGSSSGGYGGGSSSGGGHGGSSGGSYGGGSSSGGGHGGGSSS) are compositionally biased toward gly residues. The disordered stretch occupies residues 458-526 (GGGGYGGGSS…GESSSKGPRY (69 aa)). Residues 506-526 (GGHKSTTTGSVGESSSKGPRY) show a composition bias toward low complexity.

Belongs to the intermediate filament family. In terms of assembly, heterotetramer of two type I and two type II keratins. Heterodimer with KRT1. Two heterodimers of KRT1 and KRT10 form a heterotetramer. The KRT10 subunit in the heterotetramer is probably disulfide-linked.

The protein resides in the secreted. It localises to the extracellular space. Its subcellular location is the cell surface. It is found in the cytoplasm. Functionally, plays a role in the establishment of the epidermal barrier on plantar skin. Involved in the maintenance of cell layer development and keratin filament bundles in suprabasal cells of the epithelium. In Bos taurus (Bovine), this protein is Keratin, type I cytoskeletal 10 (KRT10).